A 207-amino-acid chain; its full sequence is Large ribosomal subunit protein bL25 (207 aa).

Belongs to the bacterial ribosomal protein bL25 family. CTC subfamily. In terms of assembly, part of the 50S ribosomal subunit; part of the 5S rRNA/L5/L18/L25 subcomplex. Contacts the 5S rRNA. Binds to the 5S rRNA independently of L5 and L18.

Its function is as follows. This is one of the proteins that binds to the 5S RNA in the ribosome where it forms part of the central protuberance. This is Large ribosomal subunit protein bL25 from Azorhizobium caulinodans (strain ATCC 43989 / DSM 5975 / JCM 20966 / LMG 6465 / NBRC 14845 / NCIMB 13405 / ORS 571).